The sequence spans 195 residues: Peptidyl-tRNA hydrolase (195 aa).

Tyrosine 18 contributes to the tRNA binding site. Residue histidine 23 is the Proton acceptor of the active site. 3 residues coordinate tRNA: tyrosine 69, asparagine 71, and asparagine 117.

It belongs to the PTH family. Monomer.

The protein localises to the cytoplasm. It carries out the reaction an N-acyl-L-alpha-aminoacyl-tRNA + H2O = an N-acyl-L-amino acid + a tRNA + H(+). Hydrolyzes ribosome-free peptidyl-tRNAs (with 1 or more amino acids incorporated), which drop off the ribosome during protein synthesis, or as a result of ribosome stalling. Functionally, catalyzes the release of premature peptidyl moieties from peptidyl-tRNA molecules trapped in stalled 50S ribosomal subunits, and thus maintains levels of free tRNAs and 50S ribosomes. The sequence is that of Peptidyl-tRNA hydrolase from Nitrosomonas eutropha (strain DSM 101675 / C91 / Nm57).